The following is a 953-amino-acid chain: Leucine-rich repeat receptor protein kinase HPCA1 (953 aa).

The signal sequence occupies residues Met-1–Ala-23. At Leu-24 to Ser-558 the chain is on the extracellular side. LRR repeat units follow at residues Asn-64–Leu-88, Ser-89–Leu-113, Lys-115–Leu-137, Lys-138–Ser-162, Leu-164–Pro-187, and Leu-192–Ser-216. An N-linked (GlcNAc...) asparagine glycan is attached at Asn-182. N-linked (GlcNAc...) asparagine glycosylation occurs at Asn-217. LRR repeat units follow at residues Met-218–Val-241, Lys-242–Leu-265, Thr-266–Ser-290, Tyr-292–Ser-311, Leu-313–Pro-337, Gln-339–Ser-361, and Ser-362–Val-384. Asn-264, Asn-284, and Asn-298 each carry an N-linked (GlcNAc...) asparagine glycan. A glycan (N-linked (GlcNAc...) asparagine) is linked at Asn-411. 2 cysteine pairs are disulfide-bonded: Cys-421-Cys-424 and Cys-434-Cys-436. Residues Asn-456, Asn-459, Asn-510, and Asn-523 are each glycosylated (N-linked (GlcNAc...) asparagine). Residues Ile-559 to Ile-579 form a helical membrane-spanning segment. The Cytoplasmic segment spans residues Tyr-580 to Gln-953. A phosphoserine mark is found at Ser-606 and Ser-607. The Protein kinase domain occupies Phe-631–Met-905. ATP contacts are provided by residues Val-637–Val-645 and Lys-659. The active-site Proton acceptor is Asp-755. Thr-786, Thr-789, and Thr-790 each carry phosphothreonine. The span at Pro-912 to Arg-921 shows a compositional bias: polar residues. The tract at residues Pro-912 to Gln-953 is disordered. The residue at position 942 (Ser-942) is a Phosphoserine.

Belongs to the protein kinase superfamily. Ser/Thr protein kinase family. In terms of processing, autophosphorylated at Ser-606, Ser-607, Thr-786, Thr-789, Thr-790 and Ser-942 in response to extracellular hydrogen peroxide. As to expression, widely expressed.

The protein localises to the cell membrane. The enzyme catalyses L-seryl-[protein] + ATP = O-phospho-L-seryl-[protein] + ADP + H(+). It carries out the reaction L-threonyl-[protein] + ATP = O-phospho-L-threonyl-[protein] + ADP + H(+). Activated by autophosphorylation on serine and threonine residues in response to extracellular hydrogen peroxide. In terms of biological role, leucine-rich repeat receptor protein kinase that acts as sensor of extracellular hydrogen peroxide. Required for intracellular calcium influx in response to extracellular hydrogen peroxide. Mediates hydrogen peroxide-induced activation of calcium channels in guard cells and is required for stomatal closure. In Arabidopsis thaliana (Mouse-ear cress), this protein is Leucine-rich repeat receptor protein kinase HPCA1.